A 485-amino-acid polypeptide reads, in one-letter code: MKVTQEKLPASQISLEIEISPEMSKNAYEQIIKKYIRSANIPGFRKGKVPRNILIQRLGKNYIKAMALDDLINNCLEKAREQESIKAIGQFELKTEFEELVKDFEPGKEMAFSAKVDVEPEAKVEDYKGFLVQAEEAKYDSALVDEFLEERRSRMGTLIPIEGRAAEMGDVAIVDFVGIIPSETEGEEAQEVPGGKAQDFQMDLKEGQFIPGFIEGIVGMKLQETKEISAQFPSEYSEANLAGKPVVFTVTLKELKEKELPELDDDLAQEISEFETIDKLREFLEQKFTKEKEEKTKQNKEKAIIDELVTHLEVEIPETLIKNEVQQMLAQSAMDLSQYGIDVKEFFSSEKLPEMQERTRPEAIERLKRDLVIATVAKRESITVDEEEIKAESQKVVKQLKEKDFDSDRLRQVVTQELLKEKTIKWLEANGTVELVPEGTLHTESQTPQTTEILETEVESEIPQASETIVEVKAEEVATVENSQE.

In terms of domain architecture, PPIase FKBP-type spans G169–P261.

The protein belongs to the FKBP-type PPIase family. Tig subfamily.

It localises to the cytoplasm. It carries out the reaction [protein]-peptidylproline (omega=180) = [protein]-peptidylproline (omega=0). Involved in protein export. Acts as a chaperone by maintaining the newly synthesized protein in an open conformation. Functions as a peptidyl-prolyl cis-trans isomerase. This is Trigger factor from Trichodesmium erythraeum (strain IMS101).